We begin with the raw amino-acid sequence, 413 residues long: Serpin A12 (413 aa).

The signal sequence occupies residues 1-20 (MTRMLDLGLFLAGLLTVKGL). 2 N-linked (GlcNAc...) asparagine glycosylation sites follow: Asn-92 and Asn-267. Positions 364-382 (GMEGAAGSGAQTLPMETPR) are reactive center loop.

Belongs to the serpin family. In terms of assembly, forms a stable complex with KLK7. Glycosylation slightly decreases affinity for heparin, but otherwise has no significant effect on KLK7 inhibitory activity or thermal stability of the protein. As to expression, expressed in visceral adipose tissues.

The protein localises to the secreted. With respect to regulation, inhibition of KLK7 is enhanced by heparin. Adipokine that modulates insulin action by specifically inhibiting its target protease KLK7 in white adipose tissues. The sequence is that of Serpin A12 (Serpina12) from Mus musculus (Mouse).